Consider the following 292-residue polypeptide: Probable endonuclease 4 (292 aa).

Zn(2+) is bound by residues His-71, His-111, Glu-148, Asp-182, His-185, His-217, Asp-230, His-232, and Glu-262.

This sequence belongs to the AP endonuclease 2 family. Zn(2+) serves as cofactor.

The catalysed reaction is Endonucleolytic cleavage to 5'-phosphooligonucleotide end-products.. Endonuclease IV plays a role in DNA repair. It cleaves phosphodiester bonds at apurinic or apyrimidinic (AP) sites, generating a 3'-hydroxyl group and a 5'-terminal sugar phosphate. This chain is Probable endonuclease 4, found in Aster yellows witches'-broom phytoplasma (strain AYWB).